The following is a 67-amino-acid chain: Large ribosomal subunit protein bL35 (67 aa).

It belongs to the bacterial ribosomal protein bL35 family.

The chain is Large ribosomal subunit protein bL35 from Leptospira borgpetersenii serovar Hardjo-bovis (strain JB197).